A 963-amino-acid chain; its full sequence is Kinesin-1 heavy chain (963 aa).

An N-acetylalanine modification is found at A2. Residues 8-325 (NIKVMCRFRP…LLFGQRAKTI (318 aa)) enclose the Kinesin motor domain. 85-92 (GQTSSGKT) is a binding site for ATP. A Glycyl lysine isopeptide (Lys-Gly) (interchain with G-Cter in SUMO2) cross-link involves residue K213. The stretch at 329 to 914 (VCVNVELTAE…AVRSKNMARR (586 aa)) forms a coiled coil. Positions 908–963 (SKNMARRGHSAQIAKPIRPGQHPAASPTHPGTVRGGGSFVQNNQPVGLRGGGGKQS) are disordered. A globular region spans residues 915-963 (GHSAQIAKPIRPGQHPAASPTHPGTVRGGGSFVQNNQPVGLRGGGGKQS). Residues S933 and S945 each carry the phosphoserine modification. An Omega-N-methylarginine modification is found at R956.

It belongs to the TRAFAC class myosin-kinesin ATPase superfamily. Kinesin family. Kinesin subfamily. As to quaternary structure, oligomer composed of two heavy chains and two light chains. Interacts with GRIP1 and PPP1R42. Interacts with SYBU. Interacts with JAKMIP1. Interacts with PLEKHM2. Interacts with ECPAS. Interacts with ZFYVE27. Found in a complex with OGT, RHOT1, RHOT2 and TRAK1. Interacts with APP (via cytoplasmic domain).

The protein resides in the cytoplasm. It localises to the cytoskeleton. The protein localises to the cytolytic granule membrane. Its subcellular location is the lysosome membrane. Its function is as follows. Microtubule-dependent motor required for normal distribution of mitochondria and lysosomes. May be involved in the mechanisms of growth arrest induced by exposure to DNA-damaging drugs or by cellular senescence. Can induce formation of neurite-like membrane protrusions in non-neuronal cells in a ZFYVE27-dependent manner. Regulates centrosome and nuclear positioning during mitotic entry. During the G2 phase of the cell cycle in a BICD2-dependent manner, antagonizes dynein function and drives the separation of nuclei and centrosomes. Required for anterograde axonal transportation of MAPK8IP3/JIP3 which is essential for MAPK8IP3/JIP3 function in axon elongation. Through binding with PLEKHM2 and ARL8B, directs lysosome movement toward microtubule plus ends. Involved in NK cell-mediated cytotoxicity. Drives the polarization of cytolytic granules and microtubule-organizing centers (MTOCs) toward the immune synapse between effector NK lymphocytes and target cells. The protein is Kinesin-1 heavy chain (Kif5b) of Mus musculus (Mouse).